Reading from the N-terminus, the 311-residue chain is MKALWAVLLVTLLTGCLAEGEPEVTDQLEWQSNQPWEQALNRFWDYLRWVQTLSDQVQEELQSSQVTQELTALMEDTMTEVKAYKKELEEQLGPVAEETRARLGKEVQAAQARLGADMEDLRNRLGQYRNEVHTMLGQSTEEIRARLSTHLRKMRKRLMRDAEDLQKRLAVYKAGAREGAERGVSAIRERLGPLVEQGRQRTANLGAGAAQPLRDRAQAFGDRIRGRLEEVGNQARDRLEEVREHMEEVRSKMEEQTQQIRLQAEIFQARLKGWFEPIVEDMHRQWANLMEKIQASVATNPIITPVAQENQ.

Positions 1 to 18 (MKALWAVLLVTLLTGCLA) are cleaved as a signal peptide. Repeat copies occupy residues 72–93 (ALMEDTMTEVKAYKKELEEQLG), 94–115 (PVAEETRARLGKEVQAAQARLG), 116–137 (ADMEDLRNRLGQYRNEVHTMLG), 138–159 (QSTEEIRARLSTHLRKMRKRLM), 160–181 (RDAEDLQKRLAVYKAGAREGAE), 182–203 (RGVSAIRERLGPLVEQGRQRTA), 204–225 (NLGAGAAQPLRDRAQAFGDRIR), and 226–247 (GRLEEVGNQARDRLEEVREHME). The segment at 72 to 247 (ALMEDTMTEV…RLEEVREHME (176 aa)) is 8 X 22 AA approximate tandem repeats. Methionine sulfoxide is present on M135. S139 is subject to Phosphoserine. The segment at 150 to 160 (HLRKMRKRLMR) is LDL and other lipoprotein receptors binding. 154 to 157 (MRKR) provides a ligand contact to heparin. The tract at residues 202-282 (TANLGAGAAQ…GWFEPIVEDM (81 aa)) is lipid-binding and lipoprotein association. 221-228 (GDRIRGRL) provides a ligand contact to heparin. Residues 258–311 (QQIRLQAEIFQARLKGWFEPIVEDMHRQWANLMEKIQASVATNPIITPVAQENQ) form a homooligomerization region. Residues 270 to 282 (RLKGWFEPIVEDM) are specificity for association with VLDL.

The protein belongs to the apolipoprotein A1/A4/E family. In terms of assembly, homotetramer. May interact with ABCA1; functionally associated with ABCA1 in the biogenesis of HDLs. May interact with APP/A4 amyloid-beta peptide; the interaction is extremely stable in vitro but its physiological significance is unclear. May interact with MAPT. May interact with MAP2. In the cerebrospinal fluid, interacts with secreted SORL1. Interacts with PMEL; this allows the loading of PMEL luminal fragment on ILVs to induce fibril nucleation. Post-translationally, APOE exists as multiple glycosylated and sialylated glycoforms within cells and in plasma. The extent of glycosylation and sialylation are tissue and context specific. In terms of processing, glycated in plasma VLDL. Phosphorylated by FAM20C in the extracellular medium.

The protein resides in the secreted. The protein localises to the extracellular space. Its subcellular location is the extracellular matrix. It localises to the extracellular vesicle. It is found in the endosome. The protein resides in the multivesicular body. In terms of biological role, APOE is an apolipoprotein, a protein associating with lipid particles, that mainly functions in lipoprotein-mediated lipid transport between organs via the plasma and interstitial fluids. APOE is a core component of plasma lipoproteins and is involved in their production, conversion and clearance. Apolipoproteins are amphipathic molecules that interact both with lipids of the lipoprotein particle core and the aqueous environment of the plasma. As such, APOE associates with chylomicrons, chylomicron remnants, very low density lipoproteins (VLDL) and intermediate density lipoproteins (IDL) but shows a preferential binding to high-density lipoproteins (HDL). It also binds a wide range of cellular receptors including the LDL receptor/LDLR and the very low-density lipoprotein receptor/VLDLR that mediate the cellular uptake of the APOE-containing lipoprotein particles. Finally, APOE also has a heparin-binding activity and binds heparan-sulfate proteoglycans on the surface of cells, a property that supports the capture and the receptor-mediated uptake of APOE-containing lipoproteins by cells. The protein is Apolipoprotein E (Apoe) of Mus musculus (Mouse).